We begin with the raw amino-acid sequence, 168 residues long: uncharacterized protein (168 aa).

This is an uncharacterized protein from Saccharomyces cerevisiae (strain ATCC 204508 / S288c) (Baker's yeast).